Consider the following 143-residue polypeptide: Deoxyuridine 5'-triphosphate nucleotidohydrolase (143 aa).

Substrate is bound by residues 62-64 (RSG), N75, 79-81 (TID), and K89.

Belongs to the dUTPase family. Requires Mg(2+) as cofactor.

It carries out the reaction dUTP + H2O = dUMP + diphosphate + H(+). Its pathway is pyrimidine metabolism; dUMP biosynthesis; dUMP from dCTP (dUTP route): step 2/2. Its function is as follows. This enzyme is involved in nucleotide metabolism: it produces dUMP, the immediate precursor of thymidine nucleotides and it decreases the intracellular concentration of dUTP so that uracil cannot be incorporated into DNA. This Clostridium kluyveri (strain ATCC 8527 / DSM 555 / NBRC 12016 / NCIMB 10680 / K1) protein is Deoxyuridine 5'-triphosphate nucleotidohydrolase.